A 213-amino-acid chain; its full sequence is Dimethylamine corrinoid protein (213 aa).

A B12-binding N-terminal domain is found at methionine 1–lysine 90. In terms of domain architecture, B12-binding spans leucine 91–alanine 213. Histidine 104 lines the methylcob(III)alamin pocket.

Belongs to the methylamine corrinoid protein family. In terms of assembly, copurifies with MtbA.

It participates in one-carbon metabolism; methanogenesis from dimethylamine. In terms of biological role, acts as a methyl group carrier between MtbB1 and MtbA. Binds 1 corrinoid cofactor per protein, is subsequently demethylated by MtbA. This chain is Dimethylamine corrinoid protein, found in Methanosarcina barkeri.